We begin with the raw amino-acid sequence, 383 residues long: Chaperone protein DnaJ (383 aa).

The 66-residue stretch at 6–71 (DYYEVLGVSK…QKRSQYDQFG (66 aa)) folds into the J domain. The segment at 141-223 (GVEKKVKVKK…CKGEGVEIGE (83 aa)) adopts a CR-type zinc-finger fold. Positions 154, 157, 171, 174, 197, 200, 211, and 214 each coordinate Zn(2+). 4 CXXCXGXG motif repeats span residues 154–161 (CSKCRGDG), 171–178 (CQTCHGTG), 197–204 (CPTCHGEG), and 211–218 (CSKCKGEG).

The protein belongs to the DnaJ family. Homodimer. It depends on Zn(2+) as a cofactor.

It is found in the cytoplasm. Participates actively in the response to hyperosmotic and heat shock by preventing the aggregation of stress-denatured proteins and by disaggregating proteins, also in an autonomous, DnaK-independent fashion. Unfolded proteins bind initially to DnaJ; upon interaction with the DnaJ-bound protein, DnaK hydrolyzes its bound ATP, resulting in the formation of a stable complex. GrpE releases ADP from DnaK; ATP binding to DnaK triggers the release of the substrate protein, thus completing the reaction cycle. Several rounds of ATP-dependent interactions between DnaJ, DnaK and GrpE are required for fully efficient folding. Also involved, together with DnaK and GrpE, in the DNA replication of plasmids through activation of initiation proteins. In Porphyromonas gingivalis (strain ATCC BAA-308 / W83), this protein is Chaperone protein DnaJ.